A 456-amino-acid polypeptide reads, in one-letter code: Bifunctional protein GlmU (456 aa).

A pyrophosphorylase region spans residues 1–229 (MSNSAMSVVI…LSEVEGVNNR (229 aa)). UDP-N-acetyl-alpha-D-glucosamine-binding positions include 11 to 14 (LAAG), Lys-25, Gln-76, 81 to 82 (GT), 103 to 105 (YGD), Gly-140, Glu-154, Asn-169, and Asn-227. Residue Asp-105 coordinates Mg(2+). Asn-227 contacts Mg(2+). The interval 230–250 (LQLARLERVYQAEQAEKLLLA) is linker. Positions 251-456 (GVMLRDPARF…QGWQRPVKKK (206 aa)) are N-acetyltransferase. UDP-N-acetyl-alpha-D-glucosamine is bound by residues Arg-333 and Lys-351. The active-site Proton acceptor is the His-363. Residues Tyr-366 and Asn-377 each coordinate UDP-N-acetyl-alpha-D-glucosamine. Residues Ala-380, 386-387 (NY), Ser-405, Ala-423, and Arg-440 each bind acetyl-CoA.

It in the N-terminal section; belongs to the N-acetylglucosamine-1-phosphate uridyltransferase family. In the C-terminal section; belongs to the transferase hexapeptide repeat family. Homotrimer. It depends on Mg(2+) as a cofactor.

The protein resides in the cytoplasm. It carries out the reaction alpha-D-glucosamine 1-phosphate + acetyl-CoA = N-acetyl-alpha-D-glucosamine 1-phosphate + CoA + H(+). It catalyses the reaction N-acetyl-alpha-D-glucosamine 1-phosphate + UTP + H(+) = UDP-N-acetyl-alpha-D-glucosamine + diphosphate. Its pathway is nucleotide-sugar biosynthesis; UDP-N-acetyl-alpha-D-glucosamine biosynthesis; N-acetyl-alpha-D-glucosamine 1-phosphate from alpha-D-glucosamine 6-phosphate (route II): step 2/2. It participates in nucleotide-sugar biosynthesis; UDP-N-acetyl-alpha-D-glucosamine biosynthesis; UDP-N-acetyl-alpha-D-glucosamine from N-acetyl-alpha-D-glucosamine 1-phosphate: step 1/1. The protein operates within bacterial outer membrane biogenesis; LPS lipid A biosynthesis. Its function is as follows. Catalyzes the last two sequential reactions in the de novo biosynthetic pathway for UDP-N-acetylglucosamine (UDP-GlcNAc). The C-terminal domain catalyzes the transfer of acetyl group from acetyl coenzyme A to glucosamine-1-phosphate (GlcN-1-P) to produce N-acetylglucosamine-1-phosphate (GlcNAc-1-P), which is converted into UDP-GlcNAc by the transfer of uridine 5-monophosphate (from uridine 5-triphosphate), a reaction catalyzed by the N-terminal domain. This is Bifunctional protein GlmU from Klebsiella pneumoniae subsp. pneumoniae (strain ATCC 700721 / MGH 78578).